The following is a 64-amino-acid chain: Large ribosomal subunit protein bL35 (64 aa).

Belongs to the bacterial ribosomal protein bL35 family.

This chain is Large ribosomal subunit protein bL35, found in Vibrio metschnikovii.